A 218-amino-acid chain; its full sequence is tRNA (guanine-N(7)-)-methyltransferase (218 aa).

Residues Glu-45, Glu-70, Asp-97, and Asp-119 each contribute to the S-adenosyl-L-methionine site. The active site involves Asp-119. Lys-123 provides a ligand contact to substrate. Residues 125 to 130 form an interaction with RNA region; the sequence is RHEKRR. Substrate is bound by residues Asp-155 and 195 to 198; that span reads TEYE.

Belongs to the class I-like SAM-binding methyltransferase superfamily. TrmB family.

It catalyses the reaction guanosine(46) in tRNA + S-adenosyl-L-methionine = N(7)-methylguanosine(46) in tRNA + S-adenosyl-L-homocysteine. Its pathway is tRNA modification; N(7)-methylguanine-tRNA biosynthesis. Catalyzes the formation of N(7)-methylguanine at position 46 (m7G46) in tRNA. The sequence is that of tRNA (guanine-N(7)-)-methyltransferase from Lactobacillus acidophilus (strain ATCC 700396 / NCK56 / N2 / NCFM).